The following is a 415-amino-acid chain: 3-isopropylmalate dehydratase large subunit (415 aa).

Residues C297, C355, and C358 each coordinate [4Fe-4S] cluster.

The protein belongs to the aconitase/IPM isomerase family. LeuC type 2 subfamily. In terms of assembly, heterodimer of LeuC and LeuD. [4Fe-4S] cluster serves as cofactor.

It carries out the reaction (2R,3S)-3-isopropylmalate = (2S)-2-isopropylmalate. The protein operates within amino-acid biosynthesis; L-leucine biosynthesis; L-leucine from 3-methyl-2-oxobutanoate: step 2/4. Catalyzes the isomerization between 2-isopropylmalate and 3-isopropylmalate, via the formation of 2-isopropylmaleate. The polypeptide is 3-isopropylmalate dehydratase large subunit (Caldivirga maquilingensis (strain ATCC 700844 / DSM 13496 / JCM 10307 / IC-167)).